The primary structure comprises 314 residues: MADVGYTSSPAAKEYEAQLGDYFALLKPRVMSLVVFTALVGLQAAPVSVHPVIGFASILFVAIGAGASGALNMWWDADIDAVMRRTANRPIPAGRVQPGEALNLGAALSGLSIMMLALTANFLAAGLLAFTIFFYAVIYSMWLKRWTPQNIVIGGAAGAFPPVIGWVIATGSLSIEAWLMFALIFMWTPPHFWALALFMKSDYDDAGVPMLTVTHGRKKTRAHIIAYTVLLAVLAVGTGFSAIGGPVYLAAALVLNALFLKGAIDIWRRDEDTAIADEYRVEKKFFRLSLWYLFAHFGAILLESALRPFGLGGW.

8 helical membrane-spanning segments follow: residues Val-30–His-50, Pro-51–Leu-71, Phe-122–Trp-142, Ile-151–Gly-171, Trp-178–Phe-198, Ile-224–Gly-244, Val-247–Trp-267, and Phe-285–Ala-305.

Belongs to the UbiA prenyltransferase family. Protoheme IX farnesyltransferase subfamily. In terms of assembly, interacts with CtaA.

The protein resides in the cell inner membrane. It catalyses the reaction heme b + (2E,6E)-farnesyl diphosphate + H2O = Fe(II)-heme o + diphosphate. It participates in porphyrin-containing compound metabolism; heme O biosynthesis; heme O from protoheme: step 1/1. Converts heme B (protoheme IX) to heme O by substitution of the vinyl group on carbon 2 of heme B porphyrin ring with a hydroxyethyl farnesyl side group. The sequence is that of Protoheme IX farnesyltransferase from Roseobacter denitrificans (strain ATCC 33942 / OCh 114) (Erythrobacter sp. (strain OCh 114)).